The chain runs to 336 residues: Peroxidase 20 (336 aa).

The first 24 residues, 1–24, serve as a signal peptide directing secretion; it reads MEIKQKKVWLSLIVLYAITTSVLG. 4 disulfide bridges follow: cysteine 39/cysteine 119, cysteine 72/cysteine 77, cysteine 125/cysteine 331, and cysteine 204/cysteine 239. Histidine 70 functions as the Proton acceptor in the catalytic mechanism. Ca(2+) is bound by residues aspartate 71, valine 74, glycine 76, aspartate 78, and serine 80. Proline 167 contributes to the substrate binding site. N-linked (GlcNAc...) asparagine glycosylation is present at asparagine 170. A heme b-binding site is contributed by histidine 197. Threonine 198 contributes to the Ca(2+) binding site. Aspartate 252, threonine 255, and aspartate 260 together coordinate Ca(2+).

It belongs to the peroxidase family. Classical plant (class III) peroxidase subfamily. The cofactor is heme b. Ca(2+) is required as a cofactor.

Its subcellular location is the secreted. It carries out the reaction 2 a phenolic donor + H2O2 = 2 a phenolic radical donor + 2 H2O. Removal of H(2)O(2), oxidation of toxic reductants, biosynthesis and degradation of lignin, suberization, auxin catabolism, response to environmental stresses such as wounding, pathogen attack and oxidative stress. These functions might be dependent on each isozyme/isoform in each plant tissue. Functionally, may be implicated in the systemic acquired resistance response via the salicylic acid signal transduction pathway. This Arabidopsis thaliana (Mouse-ear cress) protein is Peroxidase 20 (PER20).